We begin with the raw amino-acid sequence, 492 residues long: Stromelysin-3 (492 aa).

An N-terminal signal peptide occupies residues 1–35; sequence MARAACLLRAISRVLLLPLPLLLLLLLLLPSPLMA. Positions 36–101 are cleaved as a propeptide — activation peptide; the sequence is RARPPESHRH…VLNARNRQKR (66 aa). The Cysteine switch signature appears at 82-89; sequence LRCGVPDL. Zn(2+) contacts are provided by cysteine 84, histidine 168, and aspartate 170. Residues aspartate 175, glycine 176, glycine 178, and isoleucine 180 each coordinate Ca(2+). 3 residues coordinate Zn(2+): histidine 183, histidine 196, and histidine 219. Glutamate 220 is an active-site residue. Histidine 223 and histidine 229 together coordinate Zn(2+). 4 Hemopexin repeats span residues 295–343, 344–386, 388–436, and 437–484; these read PDVC…WQGL, PSPV…KLGL, GSPV…WRGV, and PSEI…FFDC. Cysteine 298 and cysteine 484 are disulfide-bonded.

It belongs to the peptidase M10A family. The cofactor is Ca(2+). Requires Zn(2+) as cofactor. In terms of processing, the precursor is cleaved by a furin endopeptidase. Specifically expressed in the mammary gland during apoptosis.

Its subcellular location is the secreted. The protein localises to the extracellular space. It is found in the extracellular matrix. Functionally, may play an important role in the progression of epithelial malignancies. The sequence is that of Stromelysin-3 (Mmp11) from Mus musculus (Mouse).